We begin with the raw amino-acid sequence, 124 residues long: Small ribosomal subunit protein bS6 (124 aa).

Residues 99–124 (PLPAPRIVPGSEPEPVEQQEAAAVEA) are disordered. Positions 114–124 (VEQQEAAAVEA) are enriched in low complexity.

Belongs to the bacterial ribosomal protein bS6 family.

Its function is as follows. Binds together with bS18 to 16S ribosomal RNA. This Prochlorococcus marinus (strain MIT 9303) protein is Small ribosomal subunit protein bS6.